The chain runs to 572 residues: MLFIIRARACGGDARSWKQPDQLHPILFTNLRLPLQLIASSAGGATDHNVDNTTGMLQEWLAAVGRDYATVVWKSEDEARSYPDEQGPKHWTRERHQFLMELKQEALAFARDWGADYILFADTDNILTNNQTLRLLIDRQLPVVAPMLDSQTYYSNFWCGITPQGYYRRTAEYFPTKNRQRQGCFRVPMVHSTFLVSLQTEETARLAFYPPHPNYTWPFDDIIVFAYACQAAGVSVHVCNDHRYGYMNVGVKPHQGLEEEKTNFIHLILEALVDGPPMMASAHVSRPPKKPSKMGFDEVFVISLARRPQRRARMLSSLWEMEISARVVDAVDGRTLNSSILKHLGVDLLPGYQDPYSGRTLTKGEVGCFLSHYSIWEEVVAKGLARVVVFEDDVRFEDNFRKRLERLMEDVLTQKLSWDLIYLGRKQVNPEEEVAVEGLPGLVVAGYSYWTLAYTLSLAGARKLLASQPLHRMLPVDEFLPVMFDRHPNDQYKAHFWPRDLQAFSARPLLASPTHYAGDTEWLSDTETSSPWDDDSGRLISWTGSQKTLRGPYLHLAGSSGHSLHPHPRDEL.

N-linked (GlcNAc...) asparagine glycans are attached at residues Asn-52, Asn-130, Asn-214, and Asn-337. The short motif at 569 to 572 (RDEL) is the Prevents secretion from ER element.

This sequence belongs to the glycosyltransferase 25 family.

It is found in the endoplasmic reticulum lumen. Its function is as follows. Probable cell adhesion protein involved in leukocyte transmigration across the blood-brain barrier. Does not express any beta-galactosyltransferase activity in vitro. This Rattus norvegicus (Rat) protein is Probable inactive glycosyltransferase 25 family member 3 (Cercam).